Consider the following 523-residue polypeptide: Leucine-rich repeat transmembrane neuronal protein 1 (523 aa).

An N-terminal signal peptide occupies residues 1 to 34 (MDFLLLGLCLHWLLRRPSGVVLCLLGACFQMLPA). Residues 35–63 (APSGCPGQCRCEGRLLYCEALNLTEAPHN) form the LRRNT domain. The Extracellular segment spans residues 35–428 (APSGCPGQCR…HAENAVQIHK (394 aa)). Asn56 and Asn63 each carry an N-linked (GlcNAc...) asparagine glycan. LRR repeat units follow at residues 64-87 (LSGL…QFTG), 89-111 (MQLT…AFQK), 112-135 (LRRV…TFRP), 136-159 (MPNL…LFHG), 161-183 (RKLT…IFQD), 184-207 (CRSL…SFAG), 209-231 (FKLT…HFPR), 233-255 (ISLN…LDWV), 256-278 (WNLE…VFET), and 280-302 (PYLQ…ILNS). Asn130 carries an N-linked (GlcNAc...) asparagine glycan. An LRRCT domain is found at 314–365 (NLWDCGRNVCALASWLSNFQGRYDANLQCASPEYAQGEDVLDAVYAFHLCED). Asn381 carries an N-linked (GlcNAc...) asparagine glycan. Residues 429-449 (VVTGTMALIFSFLIVVLVLYV) form a helical membrane-spanning segment. Residues 450 to 523 (SWKCFPASLR…HQQPARECEV (74 aa)) are Cytoplasmic-facing. A May be involved in DLG4-binding motif is present at residues 520–523 (ECEV).

It belongs to the LRRTM family. Interacts with DLG4.

Its subcellular location is the cell membrane. The protein localises to the postsynaptic cell membrane. Exhibits strong synaptogenic activity, restricted to excitatory presynaptic differentiation, acting at both pre- and postsynaptic level. This is Leucine-rich repeat transmembrane neuronal protein 1 (Lrrtm1) from Rattus norvegicus (Rat).